The sequence spans 440 residues: Ribulose bisphosphate carboxylase large chain (440 aa).

Lys-4 is subject to N6,N6,N6-trimethyllysine. Residues Asn-113 and Thr-163 each coordinate substrate. Residue Lys-165 is the Proton acceptor of the active site. Substrate is bound at residue Lys-167. Mg(2+)-binding residues include Lys-191, Asp-193, and Glu-194. An N6-carboxylysine modification is found at Lys-191. The active-site Proton acceptor is the His-284. The substrate site is built by Arg-285, His-317, and Ser-369.

The protein belongs to the RuBisCO large chain family. Type I subfamily. Heterohexadecamer of 8 large chains and 8 small chains; disulfide-linked. The disulfide link is formed within the large subunit homodimers. Requires Mg(2+) as cofactor. In terms of processing, the disulfide bond which can form in the large chain dimeric partners within the hexadecamer appears to be associated with oxidative stress and protein turnover.

It localises to the plastid. The protein localises to the chloroplast. It carries out the reaction 2 (2R)-3-phosphoglycerate + 2 H(+) = D-ribulose 1,5-bisphosphate + CO2 + H2O. The enzyme catalyses D-ribulose 1,5-bisphosphate + O2 = 2-phosphoglycolate + (2R)-3-phosphoglycerate + 2 H(+). Its function is as follows. RuBisCO catalyzes two reactions: the carboxylation of D-ribulose 1,5-bisphosphate, the primary event in carbon dioxide fixation, as well as the oxidative fragmentation of the pentose substrate in the photorespiration process. Both reactions occur simultaneously and in competition at the same active site. In Ptychomitrium gardneri (Gardner's ptychomitrium moss), this protein is Ribulose bisphosphate carboxylase large chain.